Consider the following 212-residue polypeptide: 3-demethoxyubiquinol 3-hydroxylase (212 aa).

A compositionally biased stretch (low complexity) spans 1–14 (MTSPSSRTPRGSTP). The interval 1-22 (MTSPSSRTPRGSTPPFEPSADE) is disordered. The Fe cation site is built by E58, E89, H92, E141, E173, and H176.

The protein belongs to the COQ7 family. The cofactor is Fe cation.

It localises to the cell membrane. It catalyses the reaction a 5-methoxy-2-methyl-3-(all-trans-polyprenyl)benzene-1,4-diol + AH2 + O2 = a 3-demethylubiquinol + A + H2O. It participates in cofactor biosynthesis; ubiquinone biosynthesis. Catalyzes the hydroxylation of 2-nonaprenyl-3-methyl-6-methoxy-1,4-benzoquinol during ubiquinone biosynthesis. The polypeptide is 3-demethoxyubiquinol 3-hydroxylase (Rhodospirillum rubrum (strain ATCC 11170 / ATH 1.1.1 / DSM 467 / LMG 4362 / NCIMB 8255 / S1)).